A 103-amino-acid chain; its full sequence is Sec-independent protein translocase protein TatA (103 aa).

The helical transmembrane segment at 1–21 (MGNIFSPTHLIVILLIVLVLF) threads the bilayer. The interval 60–103 (YSKTTDVRPQQSQPLSVKRAAERRKGSSSFKEGKASVAKKQRGK) is disordered.

It belongs to the TatA/E family. In terms of assembly, the Tat system comprises two distinct complexes: a TatABC complex, containing multiple copies of TatA, TatB and TatC subunits, and a separate TatA complex, containing only TatA subunits. Substrates initially bind to the TatABC complex, which probably triggers association of the separate TatA complex to form the active translocon.

The protein localises to the cell inner membrane. In terms of biological role, part of the twin-arginine translocation (Tat) system that transports large folded proteins containing a characteristic twin-arginine motif in their signal peptide across membranes. TatA could form the protein-conducting channel of the Tat system. This is Sec-independent protein translocase protein TatA from Bartonella quintana (strain Toulouse) (Rochalimaea quintana).